Here is a 633-residue protein sequence, read N- to C-terminus: Copine-7 (633 aa).

C2 domains are found at residues 2-133 (SAGS…MRVS) and 212-339 (NAGK…AQWD). Positions 245, 251, 307, 309, and 315 each coordinate Ca(2+). In terms of domain architecture, VWFA spans 382-581 (HFTVAIDFTA…PALRDIVQFV (200 aa)).

The protein belongs to the copine family. Ca(2+) is required as a cofactor. In terms of tissue distribution, expressed in the brain, testis, thymus and small intestine.

It localises to the cytoplasm. Its subcellular location is the nucleus. The protein localises to the cell membrane. Calcium-dependent phospholipid-binding protein that may play a role in calcium-mediated intracellular processes. The polypeptide is Copine-7 (Homo sapiens (Human)).